A 78-amino-acid chain; its full sequence is Large ribosomal subunit protein bL28 (78 aa).

Belongs to the bacterial ribosomal protein bL28 family.

The chain is Large ribosomal subunit protein bL28 from Flavobacterium psychrophilum (strain ATCC 49511 / DSM 21280 / CIP 103535 / JIP02/86).